The primary structure comprises 124 residues: MANVHQENEEMEQPLQNGQEDRPVGGGEGHQPAANNNNNNHNHNHNHHRRGQARRLAPNFRWAIPNRQMNDGLGGDGDDMEMFMEEMREIRRKLRELQLRNCLRILMGELSNHHDHHDEFCLMP.

Positions 1 to 56 are disordered; that stretch reads MANVHQENEEMEQPLQNGQEDRPVGGGEGHQPAANNNNNNHNHNHNHHRRGQARRL. Positions 42 to 53 are enriched in basic residues; sequence NHNHNHHRRGQA. Residues 81 to 106 are interaction with p75NTR/NGFR; the sequence is EMFMEEMREIRRKLRELQLRNCLRIL. The interaction with 14-3-3 epsilon stretch occupies residues 81 to 124; that stretch reads EMFMEEMREIRRKLRELQLRNCLRILMGELSNHHDHHDEFCLMP. The Nuclear export signal signature appears at 90–100; the sequence is IRRKLRELQLR. The his cluster stretch occupies residues 113–117; the sequence is HHDHH. Cys121 is a binding site for Zn(2+).

Belongs to the BEX family. As to quaternary structure, self-associates. Binds to the DEATH domain of p75NTR/NGFR. Interacts with 14-3-3 epsilon (YWHAE). Interacts with DIABLO/SMAC. In terms of processing, ubiquitinated. Degraded by the proteasome. In terms of tissue distribution, widely expressed.

The protein resides in the nucleus. It localises to the cytoplasm. The protein localises to the cytosol. Its function is as follows. May be a signaling adapter molecule involved in NGFR/p75NTR-mediated apoptosis induced by NGF. Plays a role in zinc-triggered neuronal death. In absence of reductive stress, acts as a pseudosubstrate for the CRL2(FEM1B) complex: associates with FEM1B via zinc, thereby preventing association between FEM1B and its substrates. In Mus musculus (Mouse), this protein is Protein BEX3.